The primary structure comprises 225 residues: Phosphoglycolate phosphatase (225 aa).

The active-site Nucleophile is the aspartate 11. Residues aspartate 11 and aspartate 13 each coordinate Mg(2+). Residue lysine 153 coordinates substrate. Mg(2+) contacts are provided by aspartate 176 and aspartate 180.

The protein belongs to the archaeal SPP-like hydrolase family. It depends on Mg(2+) as a cofactor.

The catalysed reaction is 2-phosphoglycolate + H2O = glycolate + phosphate. Its function is as follows. Catalyzes the dephosphorylation of 2-phosphoglycolate. This Halobacterium salinarum (strain ATCC 29341 / DSM 671 / R1) protein is Phosphoglycolate phosphatase.